The following is a 524-amino-acid chain: 12S seed storage protein CRC (524 aa).

The first 23 residues, 1 to 23, serve as a signal peptide directing secretion; sequence MVKLSNLLVATFGVLLVLNGCLA. Cys-37 and Cys-70 are oxidised to a cystine. Cupin type-1 domains are found at residues 42–289 and 346–495; these read LDVL…QLAQ and ENID…EEAR. Ser-53 carries the phosphoserine modification. Phosphotyrosine is present on Tyr-78. A Phosphoserine modification is found at Ser-97. A disulfide bridge connects residues Cys-113 and Cys-340. Thr-116 carries the post-translational modification Phosphothreonine. Residues 119-190 form a disordered region; that stretch reads DSQPMQGQQQ…QGQQGQQGFR (72 aa). Residues 124–188 are compositionally biased toward low complexity; that stretch reads QGQQQGQPWQ…EGQGQQGQQG (65 aa). Ser-259 and Ser-366 each carry phosphoserine. Residue Thr-459 is modified to Phosphothreonine. Position 484 is a phosphoserine (Ser-484). Thr-501 carries the phosphothreonine modification.

Belongs to the 11S seed storage protein (globulins) family. In terms of assembly, hexamer; each subunit is composed of an acidic and a basic chain derived from a single precursor and linked by a disulfide bond. In terms of processing, proteolytically processed during seed maturation at a conserved Asn-Gly peptide bond by an asparaginyl endopeptidase to produce two mature polypeptides referred to as alpha and beta subunits that are joined together by a disulfide bond. Phosphorylated in seeds on some Tyr residues in response to abscisic acid (ABA). As to expression, accumulates in seeds 8 days after anthesis.

The protein resides in the protein storage vacuole. Functionally, seed storage protein. This Arabidopsis thaliana (Mouse-ear cress) protein is 12S seed storage protein CRC (CRC).